Here is a 372-residue protein sequence, read N- to C-terminus: Pyrimidine monooxygenase RutA (372 aa).

FMN-binding positions include 57–58 (IK), Asn123, Glu132, 148–149 (RY), and Ser198.

The protein belongs to the NtaA/SnaA/DszA monooxygenase family. RutA subfamily.

It carries out the reaction uracil + FMNH2 + NADH + O2 = (Z)-3-ureidoacrylate + FMN + NAD(+) + H2O + H(+). The catalysed reaction is thymine + FMNH2 + NADH + O2 = (Z)-2-methylureidoacrylate + FMN + NAD(+) + H2O + H(+). Its function is as follows. Catalyzes the pyrimidine ring opening between N-3 and C-4 by an unusual flavin hydroperoxide-catalyzed mechanism, adding oxygen atoms in the process to yield ureidoacrylate peracid, that immediately reacts with FMN forming ureidoacrylate and FMN-N(5)-oxide. The FMN-N(5)-oxide reacts spontaneously with NADH to produce FMN. Requires the flavin reductase RutF to regenerate FMN in vivo. The chain is Pyrimidine monooxygenase RutA from Methylorubrum extorquens (strain PA1) (Methylobacterium extorquens).